A 158-amino-acid chain; its full sequence is Regulator of sigma D (158 aa).

Belongs to the Rsd/AlgQ family. As to quaternary structure, interacts with RpoD.

It localises to the cytoplasm. Functionally, binds RpoD and negatively regulates RpoD-mediated transcription activation by preventing the interaction between the primary sigma factor RpoD with the catalytic core of the RNA polymerase and with promoter DNA. May be involved in replacement of the RNA polymerase sigma subunit from RpoD to RpoS during the transition from exponential growth to the stationary phase. This is Regulator of sigma D from Shigella dysenteriae serotype 1 (strain Sd197).